The sequence spans 492 residues: Probable glycine dehydrogenase (decarboxylating) subunit 2 (492 aa).

An N6-(pyridoxal phosphate)lysine modification is found at lysine 274.

Belongs to the GcvP family. C-terminal subunit subfamily. In terms of assembly, the glycine cleavage system is composed of four proteins: P, T, L and H. In this organism, the P 'protein' is a heterodimer of two subunits. Pyridoxal 5'-phosphate is required as a cofactor.

The catalysed reaction is N(6)-[(R)-lipoyl]-L-lysyl-[glycine-cleavage complex H protein] + glycine + H(+) = N(6)-[(R)-S(8)-aminomethyldihydrolipoyl]-L-lysyl-[glycine-cleavage complex H protein] + CO2. Its function is as follows. The glycine cleavage system catalyzes the degradation of glycine. The P protein binds the alpha-amino group of glycine through its pyridoxal phosphate cofactor; CO(2) is released and the remaining methylamine moiety is then transferred to the lipoamide cofactor of the H protein. In Staphylococcus haemolyticus (strain JCSC1435), this protein is Probable glycine dehydrogenase (decarboxylating) subunit 2.